The chain runs to 335 residues: Ketol-acid reductoisomerase (NADP(+)) (335 aa).

The 182-residue stretch at 1-182 folds into the KARI N-terminal Rossmann domain; it reads MATIIYDNET…GATRAGVYET (182 aa). Residues 25 to 28, R48, S51, S53, and 83 to 86 each bind NADP(+); these read YGSQ and DEKQ. The active site involves H108. G134 is an NADP(+) binding site. The KARI C-terminal knotted domain occupies 183-328; the sequence is TFREETETDL…KEIRANIPWL (146 aa). Mg(2+) is bound by residues D191, E195, E227, and E231. S252 serves as a coordination point for substrate.

This sequence belongs to the ketol-acid reductoisomerase family. The cofactor is Mg(2+).

It catalyses the reaction (2R)-2,3-dihydroxy-3-methylbutanoate + NADP(+) = (2S)-2-acetolactate + NADPH + H(+). It carries out the reaction (2R,3R)-2,3-dihydroxy-3-methylpentanoate + NADP(+) = (S)-2-ethyl-2-hydroxy-3-oxobutanoate + NADPH + H(+). Its pathway is amino-acid biosynthesis; L-isoleucine biosynthesis; L-isoleucine from 2-oxobutanoate: step 2/4. It functions in the pathway amino-acid biosynthesis; L-valine biosynthesis; L-valine from pyruvate: step 2/4. Its function is as follows. Involved in the biosynthesis of branched-chain amino acids (BCAA). Catalyzes an alkyl-migration followed by a ketol-acid reduction of (S)-2-acetolactate (S2AL) to yield (R)-2,3-dihydroxy-isovalerate. In the isomerase reaction, S2AL is rearranged via a Mg-dependent methyl migration to produce 3-hydroxy-3-methyl-2-ketobutyrate (HMKB). In the reductase reaction, this 2-ketoacid undergoes a metal-dependent reduction by NADPH to yield (R)-2,3-dihydroxy-isovalerate. The polypeptide is Ketol-acid reductoisomerase (NADP(+)) (Methanosarcina acetivorans (strain ATCC 35395 / DSM 2834 / JCM 12185 / C2A)).